The following is a 746-amino-acid chain: GTPase-activating protein GYP7 (746 aa).

Phosphoserine occurs at positions 265 and 339. One can recognise a Rab-GAP TBC domain in the interval 385-633; sequence LENDSLRGKV…HIWENFWTFY (249 aa). The interval 470–505 is disordered; sequence TIDGLPPPPQQLPANENNSTSPESANDESDDADDGV. The segment covering 481 to 491 has biased composition (polar residues); sequence LPANENNSTSP.

The protein localises to the cytoplasm. Its function is as follows. GTPase-activating protein (GAP) that most effectively accelerates the intrinsic GTPase activity of Ypt/Rab-type GTPase YPT7 involved in vacuole docking and fusion. It is also active, but to a lesser extent, on YPT31, YPT32, YPT1, YPT6 and SEC4. Provides a catalytic arginine (arginine finger) in trans to accelerate the GTP hydrolysis rate of the substrate GTPase. This chain is GTPase-activating protein GYP7 (GYP7), found in Saccharomyces cerevisiae (strain ATCC 204508 / S288c) (Baker's yeast).